The primary structure comprises 1576 residues: Disco-interacting protein 2 homolog B (1576 aa).

S9, S50, and S53 each carry phosphoserine. A DMAP1-binding domain is found at 12 to 131 (AVAALPPEVR…PMPTKRRSTF (120 aa)). Positions 31–167 (LSEGDITQKG…AALSAALQQS (137 aa)) are disordered. The span at 52–62 (YSPQTQETDSA) shows a compositional bias: polar residues. The segment covering 70–83 (QTPAPSAAQTSAPS) has biased composition (low complexity). Position 71 is a phosphothreonine (T71). Residues 92–104 (GARDERYRSDIHT) are compositionally biased toward basic and acidic residues. A Phosphoserine modification is found at S100. T140 carries the phosphothreonine modification. S146, S148, and S153 each carry phosphoserine. Residues 155–167 (RRQAALSAALQQS) show a composition bias toward low complexity. A phosphoserine mark is found at S178, S193, and S203. The tract at residues 179–201 (IQGSSTSSSASSTLSHGEVKGTS) is disordered. Residues 182–193 (SSTSSSASSTLS) are compositionally biased toward low complexity. The interval 217–246 (SAPPDVTTTTSSSSSSSSIRPANIDLPPSG) is disordered. Low complexity predominate over residues 223–234 (TTTTSSSSSSSS). S259 carries the phosphoserine modification.

Belongs to the DIP2 family. In terms of assembly, interacts with alpha-tubulin. As to expression, moderately expressed in adult brain, placenta, skeletal muscle, heart, kidney, pancreas, lung, spleen and colon. Expression was weaker in adult liver, kidney, spleen, and ovary, and in fetal brain and liver. In the brain, it is expressed in the cerebral cortex; the frontal, parietal, occipital and temporal lobes; the paracentral gyrus; the pons; the corpus callosum and the hippocampus. Highest expression levels in the brain were found in the cerebral cortex and the frontal and parietal lobes.

It localises to the cell projection. It is found in the dendrite. The protein localises to the axon. The protein resides in the perikaryon. Negatively regulates axonal outgrowth and is essential for normal synaptic transmission. Not required for regulation of axon polarity. Promotes acetylation of alpha-tubulin. The sequence is that of Disco-interacting protein 2 homolog B (DIP2B) from Homo sapiens (Human).